We begin with the raw amino-acid sequence, 346 residues long: MGKVHRPRRGSLAFSPRKRARSVVPRIKKWPKDSEVRMLGFAGYKAGMTHILMIDDSPGLTKGKEIFVPVTIVEVPPLFVYGIRAYKQGYLGLETATEVWFHELNDNVKRRIKTLPKNYGEEDFKAKLGQLEDLVNDGEIVDVRLLVHTQPWLIKLKKKPEVMEYAIGGDDVKAKFEYAKERIGKEIRASEVLHEGELLDVIAVTKGKGTQGPVKRWGVKVQFHKAQRAGKGRHIGNLGPWHPARVMWTVPQAGQMGFHHRTEFNKRLIAIGENGKLVLNGNEIDITPKGGFPHYGIIRSDFLMIEGSVPGSFKRIIRVRPAIKPPKKKPPVERPQITYVSRESKQ.

The segment at 324–346 (KPPKKKPPVERPQITYVSRESKQ) is disordered.

Belongs to the universal ribosomal protein uL3 family. In terms of assembly, part of the 50S ribosomal subunit. Forms a cluster with proteins L14 and L24e.

Its function is as follows. One of the primary rRNA binding proteins, it binds directly near the 3'-end of the 23S rRNA, where it nucleates assembly of the 50S subunit. In Thermococcus gammatolerans (strain DSM 15229 / JCM 11827 / EJ3), this protein is Large ribosomal subunit protein uL3.